Reading from the N-terminus, the 870-residue chain is MQKDTLKPGEAPVRAAPHTPMMTQYHAIKAEYPDTLVFYRMGDFYEVFYADAEKASSLLDITLTKRGQSAGEPVVMAGIPFHALEGYLAKLIKLGESVAICEQVGDVATAKGPVERKVVRVVTPGTLTDTELLSDKTESILLAVHQGARNTCGLAWLSVTQGEIHLAHCANGELETWLARIAPSELLYNVDATPAFEQRLQTQRCAASARPAWQFDAALGVRRLLDQLKVASLASWHAEGLNEAHAAASALLGYAEHTQGRALPHVQGLQVVRSGELIELPPATRRNLELTQTLRGEDSPTLFSLLDTCTTGMGSRALKSWLLSPRRDRAQAASRLEAITQLRSGAQQTLRTQLKGCSDVERITARIALRQVRPRELVALQLTLQKAELLTPVDSAQIPLLTTIFEDLQPPLGCAELLGQCILDEPAALIRDGGVINHGLDAELDELRAIQTNCDGFLLDLEIREKARTGIANLRVQFNKVHGFYIEVTQGQLDKVPADYRRRQTLKNAERYITPELKTFEDKALSAQERALAREKWLYEQLLDQLQEFVPALSRLARAIAALDALCALAERSLTLNWCAPVFVKEPCIAIGQGRHPVVEARLAETGGGAFIANDCSLTGKSRMQMITGPNMGGKSTYMRQVALIVLLASVGSYVPASACRLGPIDAIHTRIGAADDVANAQSTFMLEMLEAAQILHAATPYSLVLMDEIGRGTSTFDGLALAGGIAAYLHNKAQAFTLFATHYFELTEFAAQHHGAMNVHVSAVESGSDIVFLHHIEPGPASKSYGIAVAKLAGVPAAVVNHARHALAALEAQQSQASAQVDLFAAPPEAPASGQTAIDKALASIDPDILSPREALEALYQLKKLASAA.

629–636 (GPNMGGKS) contacts ATP.

It belongs to the DNA mismatch repair MutS family.

Functionally, this protein is involved in the repair of mismatches in DNA. It is possible that it carries out the mismatch recognition step. This protein has a weak ATPase activity. This is DNA mismatch repair protein MutS from Polaromonas naphthalenivorans (strain CJ2).